The sequence spans 439 residues: Putative myrosinase 3 (439 aa).

The signal sequence occupies residues 1-19; it reads MKFRALGLVLLLAVETCKA. N-linked (GlcNAc...) asparagine glycosylation occurs at Asn-33. A beta-D-glucoside contacts are provided by residues His-145, 190-191, and Tyr-316; that span reads NQ. The N-linked (GlcNAc...) asparagine glycan is linked to Asn-336. A beta-D-glucoside contacts are provided by Glu-386 and Trp-404. Catalysis depends on Glu-386, which acts as the Nucleophile.

Belongs to the glycosyl hydrolase 1 family. In terms of tissue distribution, expressed specifically in stamens and petals.

It carries out the reaction a thioglucoside + H2O = a sugar + a thiol.. The chain is Putative myrosinase 3 from Arabidopsis thaliana (Mouse-ear cress).